The primary structure comprises 722 residues: Polyribonucleotide nucleotidyltransferase (722 aa).

Residues aspartate 487 and aspartate 493 each coordinate Mg(2+). The KH domain occupies 554–613 (PRIETFKIPTDKIREVIGTGGKVIREIVEKTGAKVNIEDDGTVKVASSDGESIKAAIKWI). The S1 motif domain maps to 623 to 691 (GEIYEGTVVK…DRGKTRLSMK (69 aa)). A disordered region spans residues 697–722 (TGEDLEAKQKAEAKAEGEAPAQAAGE). Residues 701 to 713 (LEAKQKAEAKAEG) show a composition bias toward basic and acidic residues.

Belongs to the polyribonucleotide nucleotidyltransferase family. Mg(2+) is required as a cofactor.

It is found in the cytoplasm. The catalysed reaction is RNA(n+1) + phosphate = RNA(n) + a ribonucleoside 5'-diphosphate. Involved in mRNA degradation. Catalyzes the phosphorolysis of single-stranded polyribonucleotides processively in the 3'- to 5'-direction. This Rhodopseudomonas palustris (strain ATCC BAA-98 / CGA009) protein is Polyribonucleotide nucleotidyltransferase.